We begin with the raw amino-acid sequence, 322 residues long: Ferric-anguibactin-binding protein FatB (322 aa).

Positions 1–22 (MFKSTLNIAVAIVCSSLVTLTG) are cleaved as a signal peptide. Cysteine 23 is lipidated: N-palmitoyl cysteine. Residue cysteine 23 is the site of S-diacylglycerol cysteine attachment. A Fe/B12 periplasmic-binding domain is found at 57 to 322 (RVAALDMNEV…IDDIIKGYQS (266 aa)).

It belongs to the bacterial solute-binding protein 8 family. In terms of assembly, part of an iron transport system composed of the outer membrane receptor FatA, the periplasmic binding protein FatB and the inner membrane proteins FatC and FatD.

The protein localises to the cell inner membrane. Functionally, involved in the uptake of iron in complex with the siderophore anguibactin. Binds ferric-anguibactin in the periplasm and mediates its transport into the cytoplasm. This Vibrio anguillarum (strain ATCC 68554 / 775) (Listonella anguillarum) protein is Ferric-anguibactin-binding protein FatB.